Reading from the N-terminus, the 430-residue chain is GTPase Obg (430 aa).

Residues Met1–Leu158 form the Obg domain. Positions Arg118–Pro145 are disordered. The region spanning Ala159–Glu329 is the OBG-type G domain. Residues Gly165 to Ser172, Phe190 to Lys194, Asp212 to Gly215, Asn282 to Asp285, and Ser310 to Ile312 each bind GTP. 2 residues coordinate Mg(2+): Ser172 and Thr192. The OCT domain occupies Lys352–Glu430.

Belongs to the TRAFAC class OBG-HflX-like GTPase superfamily. OBG GTPase family. In terms of assembly, monomer. Mg(2+) is required as a cofactor.

It localises to the cytoplasm. In terms of biological role, an essential GTPase which binds GTP, GDP and possibly (p)ppGpp with moderate affinity, with high nucleotide exchange rates and a fairly low GTP hydrolysis rate. Plays a role in control of the cell cycle, stress response, ribosome biogenesis and in those bacteria that undergo differentiation, in morphogenesis control. The sequence is that of GTPase Obg from Staphylococcus epidermidis (strain ATCC 12228 / FDA PCI 1200).